The following is a 69-amino-acid chain: Protein translocase subunit SecE (69 aa).

The helical transmembrane segment at 43 to 63 (VAGAGILVIGFVGFLIYVLLT) threads the bilayer.

It belongs to the SecE/SEC61-gamma family. In terms of assembly, component of the Sec protein translocase complex. Heterotrimer consisting of SecY (alpha), SecG (beta) and SecE (gamma) subunits. The heterotrimers can form oligomers, although 1 heterotrimer is thought to be able to translocate proteins. Interacts with the ribosome. May interact with SecDF, and other proteins may be involved.

It localises to the cell membrane. Its function is as follows. Essential subunit of the Sec protein translocation channel SecYEG. Clamps together the 2 halves of SecY. May contact the channel plug during translocation. In Methanococcoides burtonii (strain DSM 6242 / NBRC 107633 / OCM 468 / ACE-M), this protein is Protein translocase subunit SecE.